The following is a 335-amino-acid chain: POU domain, class 5, transcription factor 2 (335 aa).

Residues 1 to 23 are disordered; it reads MAGRRSSNVCPFPGNSGGGLEGP. Residues 113-187 form the POU-specific domain; the sequence is DVSAIQKEME…LLKMWLEEVD (75 aa). Positions 205-264 form a DNA-binding region, homeobox; it reads RKRRRASRERRIGSNLEKLFLQCPEPTPQQISYIAGRLRLQKDLVQVWFSNRSQMAGWPT.

This sequence belongs to the POU transcription factor family. Class-5 subfamily. Highly restricted to adult testis.

Its subcellular location is the nucleus. Transcription factor that binds preferentially to the octamer motif (5'-ATGTTAAT-3'). May exert a regulatory function in meiotic events that are required for terminal differentiation of male germ cell. The chain is POU domain, class 5, transcription factor 2 (Pou5f2) from Rattus norvegicus (Rat).